Consider the following 221-residue polypeptide: MALPNQQTVDYPSFKLVIVGDGGTGKTTFVKRHLTGEFEKKYEPTIGVEVHPLDFFTNCGKIRFYCWDTAGQEKFGGLRDGYYIHGQCAIIMFDVTARLTYKNVPTWHRDLCRVCENIPIVLCGNKVDVKNRQVKAKQVTFHRKKNLQYYEISAKSNYNFEKPFLYLARKLAGDANLHFVESPALAPPEVQIDIALQQRHENEILEAANQPLPDDDDDAFE.

The 165-residue stretch at 10–174 (DYPSFKLVIV…LYLARKLAGD (165 aa)) folds into the Small GTPase Ran-type domain. 21-28 (DGGTGKTT) provides a ligand contact to GTP. Residues 40-48 (KKYEPTIGV) are switch-I. GTP-binding positions include Gly-71, 125 to 128 (NKVD), and 153 to 155 (SAK). Residues 71 to 87 (GQEKFGGLRDGYYIHGQ) are switch-II.

The protein belongs to the small GTPase superfamily. Ran family. In terms of assembly, found in a nuclear export complex with RanGTP, exportin and pre-miRNA.

The protein resides in the nucleus. Functionally, GTP-binding protein involved in nucleocytoplasmic transport. Required for the import of protein into the nucleus and also for RNA export. Involved in chromatin condensation and control of cell cycle. This Vicia faba (Broad bean) protein is GTP-binding nuclear protein Ran/TC4.